A 432-amino-acid chain; its full sequence is Golgin subfamily A member 6-like protein 9 (432 aa).

Pro residues predominate over residues 1-11 (MWPQPRLPPHP). Disordered stretches follow at residues 1–77 (MWPQ…YGEG) and 349–411 (KELE…AGGA). Positions 51-62 (NGSSPDTFTSGG) are enriched in polar residues. Residues 157 to 354 (SKMEQLQDET…EQQVKELEKS (198 aa)) adopt a coiled-coil conformation. The segment covering 349–362 (KELEKSGGAEEPRG) has biased composition (basic and acidic residues). A compositionally biased stretch (low complexity) spans 366-381 (AAAARPVAGAPVPQGA).

It belongs to the GOLGA6 family.

In Homo sapiens (Human), this protein is Golgin subfamily A member 6-like protein 9.